The chain runs to 230 residues: RNA-binding riboflavin kinase RibR (230 aa).

It belongs to the RibR family.

The enzyme catalyses riboflavin + ATP = FMN + ADP + H(+). May be directly involved in the regulation of the rib genes. C-terminal part of RibR specifically binds to RFN of the rib leader of the riboflavin biosynthetic operon. The RFN element is a sequence within the rib-leader mRNA reported to serve as a receptor for an FMN-dependent riboswitch. Possibly, RibR produces the comodulator FMN through its own N-terminal flavokinase activity. FMN-activated RibR may stabilize the anti-anti terminator structure of RFN mRNA, causing transcription termination of the rib genes in trans. This chain is RNA-binding riboflavin kinase RibR (ribR), found in Bacillus subtilis (strain 168).